A 362-amino-acid chain; its full sequence is Glycyl-glycine endopeptidase ALE-1 (362 aa).

Residues 1–35 (MDTNRKFTLVKSLSIGLGTFLVGSVFLTVNDEASA) form the signal peptide. The disordered stretch occupies residues 35 to 110 (ASTKVDAPKV…PAKADAPKVE (76 aa)). Residues 40–110 (DAPKVEQEAP…PAKADAPKVE (71 aa)) show a composition bias toward basic and acidic residues. Zn(2+) contacts are provided by H150 and D154. H231 is a catalytic residue. Position 233 (H233) interacts with Zn(2+). Residues 282–350 (SESASFTANT…YLPVRTWNES (69 aa)) enclose the SH3b domain.

This sequence belongs to the peptidase M23B family. It depends on Zn(2+) as a cofactor.

The protein localises to the secreted. It carries out the reaction Hydrolysis of the -Gly-|-Gly- bond in the pentaglycine inter-peptide link joining staphylococcal cell wall peptidoglycans.. Lyses staphylococcal cells by hydrolyzing the polyglycine interpeptide bridges of the peptidoglycan. The sequence is that of Glycyl-glycine endopeptidase ALE-1 from Staphylococcus capitis.